The primary structure comprises 340 residues: Glycerol-3-phosphate dehydrogenase [NAD(P)+] (340 aa).

The NADPH site is built by Ser-12, Trp-13, Lys-34, and Lys-107. Lys-107, Gly-138, and Ser-140 together coordinate sn-glycerol 3-phosphate. Residue Ala-142 coordinates NADPH. The sn-glycerol 3-phosphate site is built by Lys-193, Asp-246, Ser-256, Arg-257, and Asn-258. Lys-193 serves as the catalytic Proton acceptor. Residue Arg-257 participates in NADPH binding. Residues Ile-281 and Glu-283 each coordinate NADPH.

This sequence belongs to the NAD-dependent glycerol-3-phosphate dehydrogenase family.

It is found in the cytoplasm. The catalysed reaction is sn-glycerol 3-phosphate + NAD(+) = dihydroxyacetone phosphate + NADH + H(+). It catalyses the reaction sn-glycerol 3-phosphate + NADP(+) = dihydroxyacetone phosphate + NADPH + H(+). Its pathway is membrane lipid metabolism; glycerophospholipid metabolism. Functionally, catalyzes the reduction of the glycolytic intermediate dihydroxyacetone phosphate (DHAP) to sn-glycerol 3-phosphate (G3P), the key precursor for phospholipid synthesis. This Enterococcus faecalis (strain ATCC 700802 / V583) protein is Glycerol-3-phosphate dehydrogenase [NAD(P)+].